Here is a 297-residue protein sequence, read N- to C-terminus: HTH-type transcriptional regulator PerR (297 aa).

Positions alanine 7–threonine 64 constitute an HTH lysR-type domain. The H-T-H motif DNA-binding region spans phenylalanine 24–lysine 44.

Belongs to the LysR transcriptional regulatory family.

Functionally, apparent regulatory gene involved in peroxide resistance in stationary phase. The protein is HTH-type transcriptional regulator PerR (perR) of Escherichia coli (strain K12).